Consider the following 262-residue polypeptide: Indole-3-glycerol phosphate synthase (262 aa).

It belongs to the TrpC family.

It catalyses the reaction 1-(2-carboxyphenylamino)-1-deoxy-D-ribulose 5-phosphate + H(+) = (1S,2R)-1-C-(indol-3-yl)glycerol 3-phosphate + CO2 + H2O. It functions in the pathway amino-acid biosynthesis; L-tryptophan biosynthesis; L-tryptophan from chorismate: step 4/5. In Clostridium kluyveri (strain NBRC 12016), this protein is Indole-3-glycerol phosphate synthase.